We begin with the raw amino-acid sequence, 289 residues long: ATP synthase gamma chain (289 aa).

The protein belongs to the ATPase gamma chain family. As to quaternary structure, F-type ATPases have 2 components, CF(1) - the catalytic core - and CF(0) - the membrane proton channel. CF(1) has five subunits: alpha(3), beta(3), gamma(1), delta(1), epsilon(1). CF(0) has three main subunits: a, b and c.

The protein resides in the cell inner membrane. In terms of biological role, produces ATP from ADP in the presence of a proton gradient across the membrane. The gamma chain is believed to be important in regulating ATPase activity and the flow of protons through the CF(0) complex. This Haemophilus influenzae (strain ATCC 51907 / DSM 11121 / KW20 / Rd) protein is ATP synthase gamma chain.